The sequence spans 213 residues: Peroxisomal protein 2 (213 aa).

Residues E211–L213 carry the Peroxisomal target signal 1 (PTS1) motif.

Belongs to the PXP2 family.

The protein resides in the peroxisome matrix. Its subcellular location is the cytoplasm. The protein localises to the cytosol. It localises to the nucleus. Functionally, probably involved in peroxisome formation or maintenance as well as in amino acid metabolism. The sequence is that of Peroxisomal protein 2 from Schizosaccharomyces pombe (strain 972 / ATCC 24843) (Fission yeast).